A 736-amino-acid chain; its full sequence is Zinc finger MYND domain-containing protein 15 (736 aa).

Disordered regions lie at residues 70 to 94 (SLGQ…DEPP) and 109 to 192 (LEDG…KNAE). Acidic residues predominate over residues 110–123 (EDGEEGEEEEEDEE). 2 stretches are compositionally biased toward basic and acidic residues: residues 124–135 (HGERPGMEKVEP) and 165–185 (ASRE…PEKR). Zn(2+) is bound by residues Cys-307, Cys-310, Cys-322, Cys-325, Cys-331, Cys-335, His-349, and Cys-353. An MYND-type zinc finger spans residues 307–353 (CHVCHKHSFEVKLTPCPQCSAVLYCGEACLQADWRRCPDDVSHRFWC). 2 disordered regions span residues 556–583 (DGPE…GGRR) and 696–736 (GGTV…RRRR). Pro residues predominate over residues 704-718 (GPAPRPPTPAAPPVP). The span at 719–736 (ARRRRGEKKAARGPRRRR) shows a compositional bias: basic residues.

As to quaternary structure, interacts with HDAC1, HDAC3, HDAC6 and, to a lesser extent, with HDAC7. As to expression, testis-specific. Expressed in pachytene spermatocytes and all developing spermatids, but not in Sertoli, nor Leydig cells (at protein level).

Its subcellular location is the nucleus. It is found in the cytoplasm. Functionally, acts as a transcriptional repressor through interaction with histone deacetylases (HDACs). May regulate haploid genes important for spermiogenesis. This is Zinc finger MYND domain-containing protein 15 (Zmynd15) from Mus musculus (Mouse).